The chain runs to 172 residues: Large ribosomal subunit protein bL9 (172 aa).

This sequence belongs to the bacterial ribosomal protein bL9 family.

Its function is as follows. Binds to the 23S rRNA. In Chlamydia abortus (strain DSM 27085 / S26/3) (Chlamydophila abortus), this protein is Large ribosomal subunit protein bL9.